Consider the following 169-residue polypeptide: Crossover junction endodeoxyribonuclease RuvC (169 aa).

Residues D7, E67, and D139 contribute to the active site. 3 residues coordinate Mg(2+): D7, E67, and D139.

The protein belongs to the RuvC family. As to quaternary structure, homodimer which binds Holliday junction (HJ) DNA. The HJ becomes 2-fold symmetrical on binding to RuvC with unstacked arms; it has a different conformation from HJ DNA in complex with RuvA. In the full resolvosome a probable DNA-RuvA(4)-RuvB(12)-RuvC(2) complex forms which resolves the HJ. Mg(2+) is required as a cofactor.

Its subcellular location is the cytoplasm. The catalysed reaction is Endonucleolytic cleavage at a junction such as a reciprocal single-stranded crossover between two homologous DNA duplexes (Holliday junction).. In terms of biological role, the RuvA-RuvB-RuvC complex processes Holliday junction (HJ) DNA during genetic recombination and DNA repair. Endonuclease that resolves HJ intermediates. Cleaves cruciform DNA by making single-stranded nicks across the HJ at symmetrical positions within the homologous arms, yielding a 5'-phosphate and a 3'-hydroxyl group; requires a central core of homology in the junction. The consensus cleavage sequence is 5'-(A/T)TT(C/G)-3'. Cleavage occurs on the 3'-side of the TT dinucleotide at the point of strand exchange. HJ branch migration catalyzed by RuvA-RuvB allows RuvC to scan DNA until it finds its consensus sequence, where it cleaves and resolves the cruciform DNA. The sequence is that of Crossover junction endodeoxyribonuclease RuvC from Rhodospirillum rubrum (strain ATCC 11170 / ATH 1.1.1 / DSM 467 / LMG 4362 / NCIMB 8255 / S1).